Consider the following 92-residue polypeptide: C-C motif chemokine 3 (92 aa).

The N-terminal stretch at 1 to 19 (MKVPGAALAVLLCTMSLCS) is a signal peptide. Intrachain disulfides connect Cys-33/Cys-57 and Cys-34/Cys-73.

The protein belongs to the intercrine beta (chemokine CC) family. Self-associates. Also heterodimer of MIP-1-alpha(4-69) and MIP-1-beta(3-69). Interacts with CCR1.

It is found in the secreted. Functionally, monokine with inflammatory and chemokinetic properties. Binds to CCR1, CCR4 and CCR5. One of the major HIV-suppressive factors produced by CD8+ T-cells. Recombinant MIP-1-alpha induces a dose-dependent inhibition of different strains of HIV-1, HIV-2, and simian immunodeficiency virus (SIV). This is C-C motif chemokine 3 (CCL3) from Canis lupus familiaris (Dog).